Here is a 480-residue protein sequence, read N- to C-terminus: Glutamate--tRNA ligase (480 aa).

Residues 8–18 (PSPTGPLHIGG) carry the 'HIGH' region motif. Residues 249 to 253 (KMSKR) carry the 'KMSKS' region motif. Lys252 is a binding site for ATP.

It belongs to the class-I aminoacyl-tRNA synthetase family. Glutamate--tRNA ligase type 1 subfamily. In terms of assembly, monomer.

Its subcellular location is the cytoplasm. It catalyses the reaction tRNA(Glu) + L-glutamate + ATP = L-glutamyl-tRNA(Glu) + AMP + diphosphate. In terms of biological role, catalyzes the attachment of glutamate to tRNA(Glu) in a two-step reaction: glutamate is first activated by ATP to form Glu-AMP and then transferred to the acceptor end of tRNA(Glu). The chain is Glutamate--tRNA ligase from Carboxydothermus hydrogenoformans (strain ATCC BAA-161 / DSM 6008 / Z-2901).